Consider the following 500-residue polypeptide: Lysine--tRNA ligase (500 aa).

The Mg(2+) site is built by glutamate 411 and glutamate 418.

It belongs to the class-II aminoacyl-tRNA synthetase family. In terms of assembly, homodimer. It depends on Mg(2+) as a cofactor.

Its subcellular location is the cytoplasm. It carries out the reaction tRNA(Lys) + L-lysine + ATP = L-lysyl-tRNA(Lys) + AMP + diphosphate. This Actinobacillus pleuropneumoniae serotype 5b (strain L20) protein is Lysine--tRNA ligase.